Consider the following 512-residue polypeptide: Maturase K (512 aa).

The protein belongs to the intron maturase 2 family. MatK subfamily.

Its subcellular location is the plastid. The protein localises to the chloroplast. Usually encoded in the trnK tRNA gene intron. Probably assists in splicing its own and other chloroplast group II introns. In Koelreuteria paniculata (Goldenrain tree), this protein is Maturase K.